The chain runs to 224 residues: CMRF35-like molecule 6 (224 aa).

A signal peptide spans 1 to 20 (MTARAWASWRSSALLLLLVP). The Extracellular portion of the chain corresponds to 21-183 (GYFPLSHPMT…HPGSLFSNVR (163 aa)). Residues 22 to 130 (YFPLSHPMTV…HDPIVEVEVS (109 aa)) enclose the Ig-like V-type domain. 2 disulfides stabilise this stretch: C43–C110 and C57–C65. N90 and N99 each carry an N-linked (GlcNAc...) asparagine glycan. Positions 136-151 (TTTASSPQSSMGTSGP) are enriched in polar residues. The disordered stretch occupies residues 136–174 (TTTASSPQSSMGTSGPPTKLPVHTWPSVTRKDSPEPSPH). Residues 184–204 (FLLLVLLELPLLLSMLGAVLW) traverse the membrane as a helical segment. At 205–224 (VNRPQRSSRSRQNWPKGENQ) the chain is on the cytoplasmic side.

The protein belongs to the CD300 family. Present on the surface of monocytes, neutrophils, a proportion of peripheral blood T- and B-lymphocytes and lymphocytic cell lines.

The protein resides in the cell membrane. In Homo sapiens (Human), this protein is CMRF35-like molecule 6 (CD300C).